The chain runs to 157 residues: NADPH-dependent 7-cyano-7-deazaguanine reductase (157 aa).

Cysteine 55 serves as the catalytic Thioimide intermediate. The active-site Proton donor is the aspartate 62. Substrate-binding positions include 77-79 (VES) and 96-97 (HE).

The protein belongs to the GTP cyclohydrolase I family. QueF type 1 subfamily.

The protein localises to the cytoplasm. The enzyme catalyses 7-aminomethyl-7-carbaguanine + 2 NADP(+) = 7-cyano-7-deazaguanine + 2 NADPH + 3 H(+). The protein operates within tRNA modification; tRNA-queuosine biosynthesis. In terms of biological role, catalyzes the NADPH-dependent reduction of 7-cyano-7-deazaguanine (preQ0) to 7-aminomethyl-7-deazaguanine (preQ1). The polypeptide is NADPH-dependent 7-cyano-7-deazaguanine reductase (Neisseria meningitidis serogroup B (strain ATCC BAA-335 / MC58)).